The chain runs to 132 residues: ATP synthase epsilon chain, chloroplastic (132 aa).

It belongs to the ATPase epsilon chain family. F-type ATPases have 2 components, CF(1) - the catalytic core - and CF(0) - the membrane proton channel. CF(1) has five subunits: alpha(3), beta(3), gamma(1), delta(1), epsilon(1). CF(0) has three main subunits: a, b and c.

The protein localises to the plastid. Its subcellular location is the chloroplast thylakoid membrane. Produces ATP from ADP in the presence of a proton gradient across the membrane. This is ATP synthase epsilon chain, chloroplastic from Adiantum capillus-veneris (Maidenhair fern).